Reading from the N-terminus, the 612-residue chain is UvrABC system protein C (612 aa).

The GIY-YIG domain maps to 20 to 98; sequence THSGVYRMLD…IKQHRPKYNI (79 aa). Residues 208–243 form the UVR domain; sequence SSVLEEISAKMYQASEDMEYEKAQVYRDQLVVLRKL.

This sequence belongs to the UvrC family. In terms of assembly, interacts with UvrB in an incision complex.

The protein resides in the cytoplasm. The UvrABC repair system catalyzes the recognition and processing of DNA lesions. UvrC both incises the 5' and 3' sides of the lesion. The N-terminal half is responsible for the 3' incision and the C-terminal half is responsible for the 5' incision. This is UvrABC system protein C from Francisella tularensis subsp. tularensis (strain WY96-3418).